The following is a 249-amino-acid chain: Triosephosphate isomerase (249 aa).

Asparagine 9–lysine 11 serves as a coordination point for substrate. Histidine 95 acts as the Electrophile in catalysis. Glutamate 166 functions as the Proton acceptor in the catalytic mechanism. Substrate contacts are provided by residues glycine 172, serine 211, and glycine 232–glycine 233.

This sequence belongs to the triosephosphate isomerase family. As to quaternary structure, homodimer.

The protein resides in the cytoplasm. The enzyme catalyses D-glyceraldehyde 3-phosphate = dihydroxyacetone phosphate. The protein operates within carbohydrate biosynthesis; gluconeogenesis. Its pathway is carbohydrate degradation; glycolysis; D-glyceraldehyde 3-phosphate from glycerone phosphate: step 1/1. Involved in the gluconeogenesis. Catalyzes stereospecifically the conversion of dihydroxyacetone phosphate (DHAP) to D-glyceraldehyde-3-phosphate (G3P). The polypeptide is Triosephosphate isomerase (Legionella pneumophila (strain Paris)).